Consider the following 844-residue polypeptide: Janus kinase and microtubule-interacting protein 3 (844 aa).

A coiled-coil region spans residues 8 to 259 (SRAKGDKAET…LSQAKEAERH (252 aa)). Residues 249–290 (QLSQAKEAERHPGSPRRELPYASGAGDASDHSGSPEQQLDEK) form a disordered region. Residues 254–267 (KEAERHPGSPRREL) show a composition bias toward basic and acidic residues. Low complexity predominate over residues 270-282 (ASGAGDASDHSGS). Positions 289-421 (EKDARRFQLK…DELSKTLETA (133 aa)) form a coiled coil. Position 384 is a phosphoserine (S384). The span at 466 to 483 (SDGSSISYQTDRTDQTPC) shows a compositional bias: polar residues. Positions 466–488 (SDGSSISYQTDRTDQTPCTPEDD) are disordered. Coiled coils occupy residues 493–621 (MAKE…RERK) and 688–833 (EKWL…LFLF).

Belongs to the JAKMIP family.

It is found in the golgi apparatus. This Mus musculus (Mouse) protein is Janus kinase and microtubule-interacting protein 3 (Jakmip3).